The primary structure comprises 628 residues: FAD-linked oxidoreductase easE (628 aa).

Residues 1–20 (MSHRILCVAFCVCSLVAVSS) form the signal peptide. An FAD-binding PCMH-type domain is found at 144 to 328 (HQGRIPLYSA…TRATMRVHLN (185 aa)). A Pros-8alpha-FAD histidine modification is found at His182. N-linked (GlcNAc...) asparagine glycosylation is found at Asn343, Asn382, and Asn487.

Belongs to the oxygen-dependent FAD-linked oxidoreductase family. It depends on FAD as a cofactor.

It functions in the pathway alkaloid biosynthesis; ergot alkaloid biosynthesis. Functionally, FAD binding oxidoreductase; part of the gene cluster that mediates the biosynthesis of fumiclavanine C, a fungal ergot alkaloid. DmaW catalyzes the first step of ergot alkaloid biosynthesis by condensing dimethylallyl diphosphate (DMAP) and tryptophan to form 4-dimethylallyl-L-tryptophan. The second step is catalyzed by the methyltransferase easF that methylates 4-dimethylallyl-L-tryptophan in the presence of S-adenosyl-L-methionine, resulting in the formation of 4-dimethylallyl-L-abrine. The catalase easC and the FAD-dependent oxidoreductase easE then transform 4-dimethylallyl-L-abrine to chanoclavine-I which is further oxidized by EasD in the presence of NAD(+), resulting in the formation of chanoclavine-I aldehyde. EasA reduces chanoclavine-I aldehyde to dihydrochanoclavine-I aldehyde that spontaneously dehydrates to form 6,8-dimethyl-6,7-didehydroergoline. EasG then catalyzes the reduction of 6,8-dimethyl-6,7-didehydroergoline to form festuclavine. Hydrolysis of festuclavine by easM then leads to the formation of fumigaclavine B which is in turn acetylated by easN to fumigaclavine A. Finally, easL catalyzes the conversion of fumigaclavine A into fumigaclavine C by attaching a dimethylallyl moiety to C-2 of the indole nucleus. This is FAD-linked oxidoreductase easE from Aspergillus fumigatus (strain ATCC MYA-4609 / CBS 101355 / FGSC A1100 / Af293) (Neosartorya fumigata).